The chain runs to 514 residues: Developmental and secondary metabolism regulator veA (514 aa).

Residues 26-218 (NRHLWYQLTV…ADQGCHVRIR (193 aa)) form the Velvet domain. A Nuclear localization signal motif is present at residues 40–45 (ERARAC). The segment at 219–463 (RDVRMRKRDA…PIGSKRKHDQ (245 aa)) is disordered. The segment covering 228 to 243 (AKSNNGRDRREDDMAR) has biased composition (basic and acidic residues). Residues 256-267 (SAAARARSMSNS) are compositionally biased toward low complexity. Residues 386-396 (SYPSTPVSSHP) show a composition bias toward polar residues. The tract at residues 411 to 448 (KSPSNSVSPSNSSLKITDLLVQPLPSSEPKLEVGSAPC) is PEST. Over residues 412 to 423 (SPSNSVSPSNSS) the composition is skewed to low complexity.

It belongs to the velvet family. VeA subfamily. In terms of assembly, component of the heterotrimeric velvet complex composed of laeA, veA and velB; VeA acting as a bridging protein between laeA and velB.

Its subcellular location is the nucleus. It is found in the cytoplasm. Functionally, component of the velvet transcription factor complex that controls sexual/asexual developmental ratio in response to light, promoting sexual development in the darkness while stimulating asexual sporulation under illumination. The velvet complex hat acts as a global regulator for secondary metabolite gene expression. Controls the expression of the cephalosporin C gene cluster. Regulates hyphal fragmentation. The polypeptide is Developmental and secondary metabolism regulator veA (Hapsidospora chrysogenum (strain ATCC 11550 / CBS 779.69 / DSM 880 / IAM 14645 / JCM 23072 / IMI 49137) (Acremonium chrysogenum)).